Reading from the N-terminus, the 343-residue chain is GDP-D-glucose phosphorylase 1 (343 aa).

H183 (tele-GMP-histidine intermediate) is an active-site residue.

This sequence belongs to the GDPGP1 family.

It localises to the cytoplasm. It catalyses the reaction GDP-alpha-D-glucose + phosphate = alpha-D-glucose 1-phosphate + GDP + H(+). Its function is as follows. Specific and highly efficient GDP-D-glucose phosphorylase regulating the levels of GDP-D-glucose in cells. This is GDP-D-glucose phosphorylase 1 (gdpgp1) from Danio rerio (Zebrafish).